An 840-amino-acid polypeptide reads, in one-letter code: Phosphatidylglycerol lysyltransferase (840 aa).

Residues 1-8 (MTQELKSK) lie on the Cytoplasmic side of the membrane. A helical membrane pass occupies residues 9–29 (LLSFFKFIFATALFIFVIFTL). The Extracellular segment spans residues 30-52 (YRELSHINFKETFIQFGKINRLW). Residues 53 to 73 (LVLLFAGGGLSLILLSLYDII) form a helical membrane-spanning segment. At 74–89 (LVKALKLKMPLIRVFR) the chain is on the cytoplasmic side. A helical transmembrane segment spans residues 90–110 (VSYIINALNSIIGFGGFIGAG). At 111-129 (VRAFVYKNYTNDTKKLVQY) the chain is on the extracellular side. A helical membrane pass occupies residues 130 to 150 (ISIILVSMLTGLSLLSILVVL). Over 151–161 (RIFNASHMIDE) the chain is Cytoplasmic. Residues 162–182 (ISWVRWILYIVALFLPIFIFY) form a helical membrane-spanning segment. The Extracellular portion of the chain corresponds to 183–200 (TVARPVDRNNRYMGVYCT). A helical membrane pass occupies residues 201-221 (VVSCVEWMAAATVLYFAALIV). The Cytoplasmic portion of the chain corresponds to 222–229 (DIHISFMT). Residues 230–250 (FVGIFVIAALSGLVSFIPGGF) form a helical membrane-spanning segment. Topologically, residues 251-270 (GAFDLVVLLGLKSLGISEEK) are extracellular. Residues 271-291 (ILLALVLYRFAYYFVPVMIAL) traverse the membrane as a helical segment. Residues 292 to 337 (ILSSFEFGNTAKKYLDNSKYFIPVKDFTSFLRSYQKDILAKVPSFS) are Cytoplasmic-facing. Residues 338-358 (LAILIFLTSIIFFINNLTIVY) traverse the membrane as a helical segment. At 359 to 366 (DGLYDGNH) the chain is on the extracellular side. The chain crosses the membrane as a helical span at residues 367 to 387 (FAYYIALAIQTSACLLLILNV). Over 388–392 (RGIYK) the chain is Cytoplasmic. Residues 393-413 (GSRRAIIYAFISIILIASATI) traverse the membrane as a helical segment. Residues 414–415 (YT) lie on the Extracellular side of the membrane. Residues 416–436 (YASFLLLSWLIIIFVLLILAY) traverse the membrane as a helical segment. The Cytoplasmic portion of the chain corresponds to 437-450 (QRAQVLKRPLRFKK). The chain crosses the membrane as a helical span at residues 451 to 471 (LAFMLLLSIFILYLNHILISG). Over 472–489 (TLYALDVYHIEIDTSLLR) the chain is Extracellular. A helical membrane pass occupies residues 490 to 510 (YYFWMTIVIIMLLVGVIAWLF). Residues 511–840 (DYKYKRPHHS…LKVMRVIRHK (330 aa)) lie on the Cytoplasmic side of the membrane.

This sequence belongs to the LPG synthase family.

The protein localises to the cell membrane. It carries out the reaction L-lysyl-tRNA(Lys) + a 1,2-diacyl-sn-glycero-3-phospho-(1'-sn-glycerol) = a 1,2-diacyl-sn-glycero-3-phospho-1'-(3'-O-L-lysyl)-sn-glycerol + tRNA(Lys). Its function is as follows. Catalyzes the transfer of a lysyl group from L-lysyl-tRNA(Lys) to membrane-bound phosphatidylglycerol (PG), which produces lysylphosphatidylglycerol (LPG), a major component of the bacterial membrane with a positive net charge. LPG synthesis contributes to bacterial virulence as it is involved in the resistance mechanism against cationic antimicrobial peptides (CAMP) produces by the host's immune system (defensins, cathelicidins) and by the competing microorganisms (bacteriocins). In fact, the modification of anionic phosphatidylglycerol with positively charged L-lysine results in repulsion of the peptides. This is Phosphatidylglycerol lysyltransferase (mprF) from Staphylococcus epidermidis (strain ATCC 35984 / DSM 28319 / BCRC 17069 / CCUG 31568 / BM 3577 / RP62A).